Reading from the N-terminus, the 226-residue chain is 26S proteasome non-ATPase regulatory subunit 10 (226 aa).

The segment at 1 to 37 is required for nuclear localization; the sequence is MEGCVSNLMVCNLAYSGKLEELKESILADKSLATRTD. The tract at residues 1-71 is interaction with RB1; that stretch reads MEGCVSNLMV…LGVPVNDKDD (71 aa). ANK repeat units follow at residues 3–36, 37–69, 70–102, 103–135, 136–168, 169–201, and 202–226; these read GCVS…ATRT, DQDS…VNDK, DDAG…VNAV, NQNG…PDAK, DHYE…TNIQ, DTEG…IYIE, and NKEE…MVEG. An interaction with RELA region spans residues 39 to 226; it reads DSRTALHWAC…GLILKRMVEG (188 aa). The interval 171 to 226 is interaction with RB1; the sequence is EGNTPLHLACDEERVEEAKLLVSQGASIYIENKEEKTPLQVAKGGLGLILKRMVEG.

In terms of assembly, part of transient complex containing PSMD10, PSMC4, PSMC5 and PAAF1 formed during the assembly of the 26S proteasome. Stays associated throughout the assembly of the PA700/19S RC and is released upon association with the 20S core. Interacts with PSMC4. Interacts with RB1. Interacts with CDK4. Interacts with MDM2. Interacts with RELA. Associates with a CDK4:CCND2 serine/threonine kinase complex. Interacts with ARHGDIA and increases the interaction between ARHGDIA and RHOA, hence promotes ARHGDIA inactivation of RHOA and ROCK. In terms of tissue distribution, tends to be up-regulated in cancer cells with RAS mutations, including lung cancers and adenocarconimas (at protein level).

It localises to the cytoplasm. The protein resides in the nucleus. In terms of biological role, acts as a chaperone during the assembly of the 26S proteasome, specifically of the PA700/19S regulatory complex (RC). In the initial step of the base subcomplex assembly is part of an intermediate PSMD10:PSMC4:PSMC5:PAAF1 module which probably assembles with a PSMD5:PSMC2:PSMC1:PSMD2 module. Independently of the proteasome, regulates EGF-induced AKT activation through inhibition of the RHOA/ROCK/PTEN pathway, leading to prolonged AKT activation. Plays an important role in RAS-induced tumorigenesis. Functionally, acts as an proto-oncoprotein by being involved in negative regulation of tumor suppressors RB1 and p53/TP53. Overexpression is leading to phosphorylation of RB1 and proteasomal degradation of RB1. Regulates CDK4-mediated phosphorylation of RB1 by competing with CDKN2A for binding with CDK4. Facilitates binding of MDM2 to p53/TP53 and the mono- and polyubiquitination of p53/TP53 by MDM2 suggesting a function in targeting the TP53:MDM2 complex to the 26S proteasome. Involved in p53-independent apoptosis. Involved in regulation of NF-kappa-B by retaining it in the cytoplasm. Binds to the NF-kappa-B component RELA and accelerates its XPO1/CRM1-mediated nuclear export. This Homo sapiens (Human) protein is 26S proteasome non-ATPase regulatory subunit 10 (PSMD10).